Reading from the N-terminus, the 254-residue chain is MEIDLNADLGEGCGSDEALLDLVTSANIACGWHAGGAPAMRDCVRWAVEKGVSIGAHPSFHDPENFGRKEMDLPASEIYAGVLYQLGALSAIAQAEGGRIAHVKPHGALYNQAARDAEIADAVVSAIHDFDPSLAVFGLASSGFVDAARHAGLVAVEEVFADRGYRADGSLVPRSQPGALVDDEREMLARTLEMVRGQRVRAVTGEWVPLNAQTVCLHGDGPHALAFAKRIREALEAAGIDVHAPGALHAGERA.

The protein belongs to the LamB/PxpA family. In terms of assembly, forms a complex composed of PxpA, PxpB and PxpC.

The catalysed reaction is 5-oxo-L-proline + ATP + 2 H2O = L-glutamate + ADP + phosphate + H(+). Functionally, catalyzes the cleavage of 5-oxoproline to form L-glutamate coupled to the hydrolysis of ATP to ADP and inorganic phosphate. The protein is 5-oxoprolinase subunit A of Burkholderia thailandensis (strain ATCC 700388 / DSM 13276 / CCUG 48851 / CIP 106301 / E264).